Here is a 714-residue protein sequence, read N- to C-terminus: Fatty acid oxidation complex subunit alpha (714 aa).

Residues 1-190 (MDTVSAFKLE…KAGLVDEVVP (190 aa)) are enoyl-CoA hydratase. Positions 306 to 714 (GSLRSVAVLG…TFWPADERLT (409 aa)) are 3-hydroxyacyl-CoA dehydrogenase.

The protein in the N-terminal section; belongs to the enoyl-CoA hydratase/isomerase family. This sequence in the central section; belongs to the 3-hydroxyacyl-CoA dehydrogenase family. As to quaternary structure, heterotetramer of two alpha chains (FadJ) and two beta chains (FadI).

Its subcellular location is the cytoplasm. It catalyses the reaction a (3S)-3-hydroxyacyl-CoA = a (2E)-enoyl-CoA + H2O. The enzyme catalyses a 4-saturated-(3S)-3-hydroxyacyl-CoA = a (3E)-enoyl-CoA + H2O. The catalysed reaction is a (3S)-3-hydroxyacyl-CoA + NAD(+) = a 3-oxoacyl-CoA + NADH + H(+). It carries out the reaction (3S)-3-hydroxybutanoyl-CoA = (3R)-3-hydroxybutanoyl-CoA. It functions in the pathway lipid metabolism; fatty acid beta-oxidation. Catalyzes the formation of a hydroxyacyl-CoA by addition of water on enoyl-CoA. Also exhibits 3-hydroxyacyl-CoA epimerase and 3-hydroxyacyl-CoA dehydrogenase activities. The sequence is that of Fatty acid oxidation complex subunit alpha from Klebsiella pneumoniae subsp. pneumoniae (strain ATCC 700721 / MGH 78578).